We begin with the raw amino-acid sequence, 370 residues long: Protein-tyrosine sulfotransferase 1 (370 aa).

Over 1–8 the chain is Cytoplasmic; it reads MVGKLKQN. Residues 9–25 traverse the membrane as a helical; Signal-anchor for type II membrane protein segment; that stretch reads LLLACLVISSVTVFYLG. The Lumenal portion of the chain corresponds to 26–370; sequence QHAMECHHRI…KEKPQTEQVE (345 aa). Asn-60 carries N-linked (GlcNAc...) asparagine glycosylation. Residue 79-83 coordinates 3'-phosphoadenylyl sulfate; sequence RSGTT. The cysteines at positions 97 and 157 are disulfide-linked. Glu-100 functions as the Proton donor/acceptor in the catalytic mechanism. The interval 102-106 is interaction with peptide substrate; sequence RVIPR. 3'-phosphoadenylyl sulfate contacts are provided by Arg-184, Ser-192, and Arg-196. A disulfide bond links Cys-226 and Cys-234. Tyr-239 is a binding site for 3'-phosphoadenylyl sulfate. The N-linked (GlcNAc...) asparagine glycan is linked to Asn-262. Residues 286–295 and Lys-301 contribute to the 3'-phosphoadenylyl sulfate site; that span reads STDQVIKPVN.

This sequence belongs to the protein sulfotransferase family. As to quaternary structure, homodimer. Can also form heterodimers with TPST2. In terms of processing, N-glycosylated. In terms of tissue distribution, ubiquitous. Detected in heart, brain, lung, liver, spleen, kidney, skeletal muscle and testis.

It is found in the golgi apparatus membrane. It catalyses the reaction L-tyrosyl-[protein] + 3'-phosphoadenylyl sulfate = O-sulfo-L-tyrosine-[protein] + adenosine 3',5'-bisphosphate + H(+). Functionally, catalyzes the O-sulfation of tyrosine residues within acidic motifs of polypeptides, using 3'-phosphoadenylyl sulfate (PAPS) as cosubstrate. This Mus musculus (Mouse) protein is Protein-tyrosine sulfotransferase 1 (Tpst1).